A 363-amino-acid polypeptide reads, in one-letter code: Aminomethyltransferase (363 aa).

Belongs to the GcvT family. The glycine cleavage system is composed of four proteins: P, T, L and H.

It catalyses the reaction N(6)-[(R)-S(8)-aminomethyldihydrolipoyl]-L-lysyl-[protein] + (6S)-5,6,7,8-tetrahydrofolate = N(6)-[(R)-dihydrolipoyl]-L-lysyl-[protein] + (6R)-5,10-methylene-5,6,7,8-tetrahydrofolate + NH4(+). In terms of biological role, the glycine cleavage system catalyzes the degradation of glycine. The sequence is that of Aminomethyltransferase from Thermotoga neapolitana (strain ATCC 49049 / DSM 4359 / NBRC 107923 / NS-E).